Consider the following 128-residue polypeptide: Large ribosomal subunit protein uL22 (128 aa).

The protein belongs to the universal ribosomal protein uL22 family. In terms of assembly, part of the 50S ribosomal subunit.

This protein binds specifically to 23S rRNA; its binding is stimulated by other ribosomal proteins, e.g. L4, L17, and L20. It is important during the early stages of 50S assembly. It makes multiple contacts with different domains of the 23S rRNA in the assembled 50S subunit and ribosome. In terms of biological role, the globular domain of the protein is located near the polypeptide exit tunnel on the outside of the subunit, while an extended beta-hairpin is found that lines the wall of the exit tunnel in the center of the 70S ribosome. The sequence is that of Large ribosomal subunit protein uL22 from Prochlorococcus marinus (strain MIT 9515).